We begin with the raw amino-acid sequence, 218 residues long: tRNA (cytidine(56)-2'-O)-methyltransferase (218 aa).

S-adenosyl-L-methionine is bound by residues L81, 106–110 (GAEKV), and 124–131 (IGNQPHSE). Residues 170–218 (KVGEEGPSGGAPGVRAERGRGGRGEGVQGADEVRGHKRGATDRDLGDET) form a disordered region. Positions 200–218 (DEVRGHKRGATDRDLGDET) are enriched in basic and acidic residues.

The protein belongs to the aTrm56 family. As to quaternary structure, homodimer.

It is found in the cytoplasm. The catalysed reaction is cytidine(56) in tRNA + S-adenosyl-L-methionine = 2'-O-methylcytidine(56) in tRNA + S-adenosyl-L-homocysteine + H(+). Functionally, specifically catalyzes the AdoMet-dependent 2'-O-ribose methylation of cytidine at position 56 in tRNAs. This Ignicoccus hospitalis (strain KIN4/I / DSM 18386 / JCM 14125) protein is tRNA (cytidine(56)-2'-O)-methyltransferase.